Consider the following 304-residue polypeptide: Small ribosomal subunit protein uS3 (304 aa).

The KH type-2 domain occupies 17–86 (IDEFFAEELG…DPQVDVQEVD (70 aa)). A disordered region spans residues 216–304 (LLEGEPEDSE…DEMDEEGDDE (89 aa)).

Belongs to the universal ribosomal protein uS3 family. In terms of assembly, part of the 30S ribosomal subunit.

Functionally, binds the lower part of the 30S subunit head. The polypeptide is Small ribosomal subunit protein uS3 (Haloarcula marismortui (strain ATCC 43049 / DSM 3752 / JCM 8966 / VKM B-1809) (Halobacterium marismortui)).